We begin with the raw amino-acid sequence, 381 residues long: MSTKEATSETAVDYSLSNPETVNKYKIAGEVSQNVIKKVVELCQPGAKIYDICVRGDELLNEAIKKVYRTKDAYKGIAFPTAVSPNDMAAHLSPLKSDPEANLALKSGDVVKILLGAHIDGFASLVATTTVVSEEPVTGPAADVIAAASAALKAAQRTIKPGNTNWQVTDIVDKIATSYGCKPVAGMLSHQQEREVIDGKKQVILNPSDSQRSEMDTFTFEEGEVYGVDILVSTSPSGKVKRSDIATRIYKKTDTTYMLKLQASRKVYSEIQTKFGPFPFSTRNISFDSRTNMGLNECTSHKLLFPYEVLLDKDGGIVAEFYSTIALTKKGTIILSDSEPKEDFIKSDKKVEDPEIVALLETPIKVTKNKKKSKKPSKANE.

Ser8 carries the post-translational modification Phosphoserine. Thr362 carries the phosphothreonine modification. A Nuclear localization signal motif is present at residues 368–375 (KNKKKSKK).

The protein belongs to the peptidase M24 family.

The protein localises to the nucleus. Its function is as follows. A non-essential protein that preferentially binds curved DNA. Binds non-curved DNA with a much lower affinity. The chain is Curved DNA-binding protein (cdb4) from Schizosaccharomyces pombe (strain 972 / ATCC 24843) (Fission yeast).